The chain runs to 810 residues: Janus kinase and microtubule-interacting protein 2 (810 aa).

Coiled coils occupy residues 13-102 (EALI…EMSR), 148-178 (ERLKLLQEIADLKTAKKQVDEALSNMIQADK), and 207-244 (RRLMDEIKAKDRIIFSLEKELETQTGYVQKLQLQKEAL). Over residues 261–274 (PKREIPGRAGDGSE) the composition is skewed to basic and acidic residues. Disordered regions lie at residues 261–280 (PKREIPGRAGDGSEHCSSPD) and 437–465 (YDEDSMDSETSSMASFRTDRTPATPDDDL). A coiled-coil region spans residues 280–419 (DLRRNQKRIA…REKLIRRRKH (140 aa)). Coiled-coil stretches lie at residues 468-597 (SLAA…RERR) and 664-808 (EKWI…SNRK).

It belongs to the JAKMIP family. As to expression, highly expressed in brain, moderately expressed in thymus, spleen and lung, and weakly expressed in kidney, liver and peripheral blood lymphocytes. Also expressed in adrenal and pituitary glands, as well as testis.

The protein resides in the golgi apparatus. The polypeptide is Janus kinase and microtubule-interacting protein 2 (JAKMIP2) (Homo sapiens (Human)).